Reading from the N-terminus, the 130-residue chain is Holo-[acyl-carrier-protein] synthase (130 aa).

2 residues coordinate Mg(2+): Asp-8 and Glu-62.

It belongs to the P-Pant transferase superfamily. AcpS family. Mg(2+) serves as cofactor.

It localises to the cytoplasm. The enzyme catalyses apo-[ACP] + CoA = holo-[ACP] + adenosine 3',5'-bisphosphate + H(+). Functionally, transfers the 4'-phosphopantetheine moiety from coenzyme A to a Ser of acyl-carrier-protein. The chain is Holo-[acyl-carrier-protein] synthase from Acidovorax ebreus (strain TPSY) (Diaphorobacter sp. (strain TPSY)).